The chain runs to 236 residues: 2,3,4,5-tetrahydropyridine-2,6-dicarboxylate N-acetyltransferase (236 aa).

The protein belongs to the transferase hexapeptide repeat family. DapH subfamily.

It catalyses the reaction (S)-2,3,4,5-tetrahydrodipicolinate + acetyl-CoA + H2O = L-2-acetamido-6-oxoheptanedioate + CoA. The protein operates within amino-acid biosynthesis; L-lysine biosynthesis via DAP pathway; LL-2,6-diaminopimelate from (S)-tetrahydrodipicolinate (acetylase route): step 1/3. In terms of biological role, catalyzes the transfer of an acetyl group from acetyl-CoA to tetrahydrodipicolinate. The sequence is that of 2,3,4,5-tetrahydropyridine-2,6-dicarboxylate N-acetyltransferase from Oceanobacillus iheyensis (strain DSM 14371 / CIP 107618 / JCM 11309 / KCTC 3954 / HTE831).